A 236-amino-acid chain; its full sequence is Phosphoribosylformylglycinamidine synthase subunit PurQ (236 aa).

The Glutamine amidotransferase type-1 domain maps to 3–234 (FGVIVFPGSN…VDWWERGERL (232 aa)). C86 serves as the catalytic Nucleophile. Residues H203 and E205 contribute to the active site.

In terms of assembly, part of the FGAM synthase complex composed of 1 PurL, 1 PurQ and 2 PurS subunits.

The protein localises to the cytoplasm. The catalysed reaction is N(2)-formyl-N(1)-(5-phospho-beta-D-ribosyl)glycinamide + L-glutamine + ATP + H2O = 2-formamido-N(1)-(5-O-phospho-beta-D-ribosyl)acetamidine + L-glutamate + ADP + phosphate + H(+). The enzyme catalyses L-glutamine + H2O = L-glutamate + NH4(+). Its pathway is purine metabolism; IMP biosynthesis via de novo pathway; 5-amino-1-(5-phospho-D-ribosyl)imidazole from N(2)-formyl-N(1)-(5-phospho-D-ribosyl)glycinamide: step 1/2. Its function is as follows. Part of the phosphoribosylformylglycinamidine synthase complex involved in the purines biosynthetic pathway. Catalyzes the ATP-dependent conversion of formylglycinamide ribonucleotide (FGAR) and glutamine to yield formylglycinamidine ribonucleotide (FGAM) and glutamate. The FGAM synthase complex is composed of three subunits. PurQ produces an ammonia molecule by converting glutamine to glutamate. PurL transfers the ammonia molecule to FGAR to form FGAM in an ATP-dependent manner. PurS interacts with PurQ and PurL and is thought to assist in the transfer of the ammonia molecule from PurQ to PurL. This Moorella thermoacetica (strain ATCC 39073 / JCM 9320) protein is Phosphoribosylformylglycinamidine synthase subunit PurQ.